Here is a 371-residue protein sequence, read N- to C-terminus: RNA-binding protein 48 (371 aa).

The 79-residue stretch at 46 to 124 folds into the RRM domain; that stretch reads QYLLIQGVPA…GLLHVCYAPE (79 aa). 2 disordered regions span residues 157-191 and 348-371; these read KPVPEQKGTKDSRQGFHPPMPGFGTAALNTSPESP and VPKPPEDNIKDVCTSHPGKQRRRI. Positions 158–170 are enriched in basic and acidic residues; the sequence is PVPEQKGTKDSRQ.

It belongs to the RBM48 family. Component of the minor spliceosome. Within this complex, interacts with ARMC7 and PRPF8/PRP8.

Its function is as follows. As a component of the minor spliceosome, involved in the splicing of U12-type introns in pre-mRNAs. This is RNA-binding protein 48 (Rbm48) from Mus musculus (Mouse).